The following is a 148-amino-acid chain: Sec-independent protein translocase protein TatB (148 aa).

A helical transmembrane segment spans residues M1–G21. Positions E85–P148 are disordered. A compositionally biased stretch (low complexity) spans A107 to P148.

Belongs to the TatB family. The Tat system comprises two distinct complexes: a TatABC complex, containing multiple copies of TatA, TatB and TatC subunits, and a separate TatA complex, containing only TatA subunits. Substrates initially bind to the TatABC complex, which probably triggers association of the separate TatA complex to form the active translocon.

It localises to the cell inner membrane. Functionally, part of the twin-arginine translocation (Tat) system that transports large folded proteins containing a characteristic twin-arginine motif in their signal peptide across membranes. Together with TatC, TatB is part of a receptor directly interacting with Tat signal peptides. TatB may form an oligomeric binding site that transiently accommodates folded Tat precursor proteins before their translocation. The sequence is that of Sec-independent protein translocase protein TatB from Pseudomonas fluorescens (strain Pf0-1).